The chain runs to 102 residues: Large ribosomal subunit protein bL21 (102 aa).

It belongs to the bacterial ribosomal protein bL21 family. In terms of assembly, part of the 50S ribosomal subunit. Contacts protein L20.

Its function is as follows. This protein binds to 23S rRNA in the presence of protein L20. This Stenotrophomonas maltophilia (strain K279a) protein is Large ribosomal subunit protein bL21.